We begin with the raw amino-acid sequence, 909 residues long: MDTAEEDICRVCRSEGTPEKPLYHPCVCTGSIKFIHQECLVQWLKHSRKEYCELCKHRFAFTPIYSPDMPSRLPIQDIFAGLVTSIGTAIRYWFHYTLVAFAWLGVVPLTACRIYKCLFTGSVSSLLTLPLDMLSTENLLADCLQGCFVVTCTLCAFISLVWLREQIVHGGAPIWLEHAAPPFNAAGHHQNEAPVGGNGAENPAADQPANPAGENAVLGENPDAQDGQAEEEEEDNEEEDDAGVEDAADANNGAQDDMNWNALEWDRAAEELTWERMLGLDGSLVFLEHVFWVVSLNTLFILVFAFCPYHIGHFSLVGLGFEEHVQASHFEGLITTIVGYILLAITLIICHALATLVKFHRSRRLLGVCYIVVKVSLLVVVEIGVFPLICGWWLDICSLEMFDATLKDRELSFQSAPGTTMFLHWLVGMVYVFYFASFILLLREVLRPGVLWFLRNLNDPDFNPVQEMIHLPIYRHLRRFILSVIVFGSIVLLMLWLPIRIIKSLLPNFLPYNVMLYSDAPVSELSLELLLLQVVLPALLEQGHTRQWLKGLVRAWTVTAGYLLDLHSYLLGDQEENENSANQQVNNNQPARNNNAVPAGEGLHAAHQAILQQGGPVGFQPYRRPLNFPLRIFLLIVFMCITLLIASLICLTLPVFAGRWLMSFWTGTAKIHELYTAACGLYVCWLTIRAVTVLVAWMPQGRRVIFQKVKEWSLMIMKTLIVAVLLAGVVPLLLGLLFELVIVAPLRVPLDQTPLFYPWQDWALGVLHAKIIAAITLMGPQWWLKTVIEQVYANGIRNIDLHYIIRKLAAPVISVLLLSLCVPYVIASGAVPLLGVTAEMQNLVHRRIYPFLLMVVVLMGILSFQVRQFKRLYEHIKNDKYLVGQRLVNYERKSGKQGPSTPPPVSSQE.

Position 1 is an N-acetylmethionine (methionine 1). The RING-CH-type zinc-finger motif lies at 1 to 62; sequence MDTAEEDICR…ELCKHRFAFT (62 aa). At 1–91 the chain is on the cytoplasmic side; sequence MDTAEEDICR…LVTSIGTAIR (91 aa). Residues cysteine 9, cysteine 12, cysteine 26, cysteine 28, histidine 36, cysteine 39, cysteine 52, and cysteine 55 each contribute to the Zn(2+) site. Residues 92–112 traverse the membrane as a helical segment; it reads YWFHYTLVAFAWLGVVPLTAC. Residues 113-142 are Extracellular-facing; the sequence is RIYKCLFTGSVSSLLTLPLDMLSTENLLAD. The chain crosses the membrane as a helical span at residues 143–163; the sequence is CLQGCFVVTCTLCAFISLVWL. Over 164–283 the chain is Cytoplasmic; the sequence is REQIVHGGAP…WERMLGLDGS (120 aa). Residues 186–256 are disordered; the sequence is AGHHQNEAPV…AADANNGAQD (71 aa). A compositionally biased stretch (acidic residues) spans 228–248; the sequence is QAEEEEEDNEEEDDAGVEDAA. A helical transmembrane segment spans residues 284–304; that stretch reads LVFLEHVFWVVSLNTLFILVF. The Extracellular portion of the chain corresponds to 305–336; it reads AFCPYHIGHFSLVGLGFEEHVQASHFEGLITT. A helical membrane pass occupies residues 337–357; that stretch reads IVGYILLAITLIICHALATLV. At 358–376 the chain is on the cytoplasmic side; the sequence is KFHRSRRLLGVCYIVVKVS. The chain crosses the membrane as a helical span at residues 377-397; that stretch reads LLVVVEIGVFPLICGWWLDIC. Topologically, residues 398 to 421 are extracellular; sequence SLEMFDATLKDRELSFQSAPGTTM. Residues 422–442 traverse the membrane as a helical segment; the sequence is FLHWLVGMVYVFYFASFILLL. Over 443 to 480 the chain is Cytoplasmic; the sequence is REVLRPGVLWFLRNLNDPDFNPVQEMIHLPIYRHLRRF. A helical membrane pass occupies residues 481 to 501; it reads ILSVIVFGSIVLLMLWLPIRI. Topologically, residues 502–519 are extracellular; it reads IKSLLPNFLPYNVMLYSD. Residues 520-540 form a helical membrane-spanning segment; sequence APVSELSLELLLLQVVLPALL. Residues 541-631 are Cytoplasmic-facing; sequence EQGHTRQWLK…YRRPLNFPLR (91 aa). Residues 632–652 form a helical membrane-spanning segment; the sequence is IFLLIVFMCITLLIASLICLT. The Extracellular portion of the chain corresponds to 653–677; the sequence is LPVFAGRWLMSFWTGTAKIHELYTA. Residues 678–698 form a helical membrane-spanning segment; sequence ACGLYVCWLTIRAVTVLVAWM. The Cytoplasmic segment spans residues 699 to 720; the sequence is PQGRRVIFQKVKEWSLMIMKTL. The helical transmembrane segment at 721-741 threads the bilayer; it reads IVAVLLAGVVPLLLGLLFELV. At 742-763 the chain is on the extracellular side; that stretch reads IVAPLRVPLDQTPLFYPWQDWA. The chain crosses the membrane as a helical span at residues 764 to 784; that stretch reads LGVLHAKIIAAITLMGPQWWL. Over 785-814 the chain is Cytoplasmic; that stretch reads KTVIEQVYANGIRNIDLHYIIRKLAAPVIS. A helical membrane pass occupies residues 815-835; it reads VLLLSLCVPYVIASGAVPLLG. Residues 836-847 are Extracellular-facing; the sequence is VTAEMQNLVHRR. The chain crosses the membrane as a helical span at residues 848–868; that stretch reads IYPFLLMVVVLMGILSFQVRQ. The Cytoplasmic segment spans residues 869-909; that stretch reads FKRLYEHIKNDKYLVGQRLVNYERKSGKQGPSTPPPVSSQE.

Belongs to the DOA10/MARCHF6 family. In terms of assembly, interacts with DIO2. Interacts with SQLE. Post-translationally, auto-ubiquitinated, which results in proteasomal degradation. Deubiquitinated by USP19; protecting MARCHF6 from p97-mediated proteasomal degradation.

The protein localises to the endoplasmic reticulum membrane. It catalyses the reaction S-ubiquitinyl-[E2 ubiquitin-conjugating enzyme]-L-cysteine + [acceptor protein]-L-lysine = [E2 ubiquitin-conjugating enzyme]-L-cysteine + N(6)-ubiquitinyl-[acceptor protein]-L-lysine.. The protein operates within protein modification; protein ubiquitination. Functionally, endoplasmic reticulum membrane-associated E3 ubiquitin ligase that plays a critical role in mitigating endoplasmic reticulum stress, the regulation of cholesterol and lipid homeostasis, and ferroptosis. Acts as a pivotal component of both the Ac/N-degron pathway (targeting the N-terminal acetyl group of substrates) and the ER-associated protein degradation-cytosol (ERAD-C) pathway (targeting misfolded substrates). For instance, mediates the degradation of Ac/N-degron-bearing proteins such as the G-protein regulator RGS2 and the lipid droplet protein PLIN2. Suppresses endoplasmic reticulum stress and ferroptosis through cytosolic POMC degradation. Prevents ferroptosis by acting as a NADPH sensor during lipid peroxidation through its C-terminal regulatory region. Facilitates also the degradation of selected endoplasmic reticulum proteins by associating with signal peptide peptidase for the turnover of endogenous tail-anchored proteins. Promotes ubiquitination of DIO2, leading to its degradation. By ubiquitinating and thereby modulating the stability of many proteins of the cholesterol pathway including SQLE, CYP51A1, CYP11A1 and HMGCR, acts as a crucial post-translational regulator of cholesterol synthesis. The chain is E3 ubiquitin-protein ligase MARCHF6 (Marchf6) from Mus musculus (Mouse).